The primary structure comprises 46 residues: MTTLALVLAKLPEAYAPFAPIVDVLPVIPVFFILLAFVWQAAVSFR.

Residues 1–9 (MTTLALVLA) constitute a propeptide that is removed on maturation. Residues 18-38 (FAPIVDVLPVIPVFFILLAFV) traverse the membrane as a helical segment.

It belongs to the PsbK family. In terms of assembly, PSII is composed of 1 copy each of membrane proteins PsbA, PsbB, PsbC, PsbD, PsbE, PsbF, PsbH, PsbI, PsbJ, PsbK, PsbL, PsbM, PsbT, PsbX, PsbY, PsbZ, Psb30/Ycf12, at least 3 peripheral proteins of the oxygen-evolving complex and a large number of cofactors. It forms dimeric complexes. This protein is tightly associated with CP43 (psbC), one of the core proteins.

It is found in the plastid. Its subcellular location is the chloroplast thylakoid membrane. In terms of biological role, one of the components of the core complex of photosystem II (PSII). PSII is a light-driven water:plastoquinone oxidoreductase that uses light energy to abstract electrons from H(2)O, generating O(2) and a proton gradient subsequently used for ATP formation. It consists of a core antenna complex that captures photons, and an electron transfer chain that converts photonic excitation into a charge separation. Required for assembly and/or stability of PSII. This Chlamydomonas reinhardtii (Chlamydomonas smithii) protein is Photosystem II reaction center protein K.